The primary structure comprises 287 residues: L-cysteine S-thiosulfotransferase subunit SoxA (287 aa).

Positions 1–26 are cleaved as a signal peptide; the sequence is MKTMTGRLVAAALVCGGAFSGAAVSA. The Cytochrome c domain maps to 74-168; that stretch reads DDFENSGMVF…AMVALIASVS (95 aa). Heme c contacts are provided by C102, C105, H106, C140, C203, C206, and H207. R244 serves as a coordination point for substrate. C248 provides a ligand contact to heme c. C248 (cysteine persulfide intermediate) is an active-site residue.

The protein belongs to the SoxA family. As to quaternary structure, heterodimer of SoxA and SoxX. Requires heme c as cofactor. Post-translationally, cysteine persulfide at Cys-248.

The protein localises to the periplasm. The enzyme catalyses L-cysteinyl-[SoxY protein] + thiosulfate + 2 Fe(III)-[cytochrome c] = S-sulfosulfanyl-L-cysteinyl-[SoxY protein] + 2 Fe(II)-[cytochrome c] + 2 H(+). It carries out the reaction S-sulfanyl-L-cysteinyl-[SoxY protein] + thiosulfate + 2 Fe(III)-[cytochrome c] = S-(2-sulfodisulfanyl)-L-cysteinyl-[SoxY protein] + 2 Fe(II)-[cytochrome c] + 2 H(+). Functionally, C-type diheme cytochrome, which is part of the SoxAX cytochrome complex involved in sulfur oxidation. The SoxAX complex catalyzes the formation of a heterodisulfide bond between the conserved cysteine residue on a sulfur carrier SoxYZ complex subunit SoxY and thiosulfate or other inorganic sulfur substrates. This leads to the liberation of two electrons, which may be transferred from the SoxAX complex to another cytochrome c and which then may be used for reductive CO(2) fixation. The sequence is that of L-cysteine S-thiosulfotransferase subunit SoxA from Rhodovulum sulfidophilum (Rhodobacter sulfidophilus).